Consider the following 448-residue polypeptide: Probable glucuronoxylan glucuronosyltransferase IRX7 (448 aa).

Topologically, residues 1-16 (MTTHKHRRTEKNLCFK) are cytoplasmic. A helical; Signal-anchor for type II membrane protein membrane pass occupies residues 17-37 (QYYKWILCFILTLYFFASFFV). The Lumenal portion of the chain corresponds to 38 to 448 (DHDQDHRSST…RSVRRSNSFL (411 aa)). N-linked (GlcNAc...) asparagine glycosylation is found at N157, N189, N287, N397, and N438.

Belongs to the glycosyltransferase 47 family. As to expression, expressed in developing interfascicular fibers and xylem cells in stems and developing secondary xylem in roots.

It is found in the golgi apparatus membrane. Functionally, involved in the synthesis of the hemicellulose glucuronoxylan, a major component of secondary cell walls. Probably involved in the synthesis of the glycosyl sequence at the glucuronoxylan reducing end. This is Probable glucuronoxylan glucuronosyltransferase IRX7 (IRX7) from Arabidopsis thaliana (Mouse-ear cress).